A 110-amino-acid polypeptide reads, in one-letter code: Parvalbumin alpha (110 aa).

Residue Ser-2 is modified to N-acetylserine. Ser-2 and Ser-24 each carry phosphoserine. 2 consecutive EF-hand domains span residues Lys-39–Asp-74 and Leu-78–Ser-110. Residues Asp-52, Asp-54, Ser-56, Phe-58, Glu-60, Glu-63, Asp-91, Asp-93, Asp-95, Lys-97, and Glu-102 each coordinate Ca(2+).

Belongs to the parvalbumin family.

In muscle, parvalbumin is thought to be involved in relaxation after contraction. It binds two calcium ions. The protein is Parvalbumin alpha (PVALB) of Macaca fuscata fuscata (Japanese macaque).